The primary structure comprises 362 residues: Uracil-DNA glycosylase (362 aa).

Residues 28 to 97 (ASVAPNDPTE…AGPTEDPNFA (70 aa)) form a disordered region. The active-site Proton acceptor is the Asp-205.

It belongs to the uracil-DNA glycosylase (UDG) superfamily. UNG family.

Its subcellular location is the host nucleus. It carries out the reaction Hydrolyzes single-stranded DNA or mismatched double-stranded DNA and polynucleotides, releasing free uracil.. Functionally, excises uracil residues from the DNA which can arise as a result of misincorporation of dUMP residues by DNA polymerase or deamination of cytosines. Therefore may reduce deleterious uracil incorporation into the viral genome, particularly in terminally differentiated cells which lack DNA repair enzymes. In Psittacid herpesvirus 1 (isolate Amazon parrot/-/97-0001/1997) (PsHV-1), this protein is Uracil-DNA glycosylase (UL2).